A 184-amino-acid polypeptide reads, in one-letter code: Uroplakin-2 (184 aa).

The signal sequence occupies residues M1–S25. Residues D26–R84 constitute a propeptide that is removed on maturation. Residues N28, N57, and N66 are each glycosylated (N-linked (GlcNAc...) asparagine). Residues E85–G155 lie on the Lumenal side of the membrane. Residues M156–L180 form a helical membrane-spanning segment. At G181 to K184 the chain is on the cytoplasmic side.

The protein belongs to the uroplakin-2 family. In terms of assembly, interacts with uroplakin-1a (UPK1A). In terms of tissue distribution, expressed only in the urothelium. Localizes to urothelial superficial cells.

The protein localises to the cell membrane. Its function is as follows. Component of the asymmetric unit membrane (AUM); a highly specialized biomembrane elaborated by terminally differentiated urothelial cells. May play an important role in regulating the assembly of the AUM. The chain is Uroplakin-2 (UPK2) from Sus scrofa (Pig).